A 362-amino-acid polypeptide reads, in one-letter code: uncharacterized protein (362 aa).

3 disordered regions span residues Met-1–Arg-117, Ser-153–Lys-172, and Arg-210–Asn-266. Basic and acidic residues predominate over residues Ala-12–Glu-23. A compositionally biased stretch (acidic residues) spans Glu-51–Ile-70. 3 stretches are compositionally biased toward low complexity: residues Asn-100–Thr-112, Ser-153–Ser-167, and Val-241–Ser-265.

This is an uncharacterized protein from Caenorhabditis elegans.